We begin with the raw amino-acid sequence, 227 residues long: UPF0173 metal-dependent hydrolase BCB4264_A4722 (227 aa).

This sequence belongs to the UPF0173 family.

This Bacillus cereus (strain B4264) protein is UPF0173 metal-dependent hydrolase BCB4264_A4722.